A 781-amino-acid polypeptide reads, in one-letter code: 5-methyltetrahydropteroyltriglutamate--homocysteine methyltransferase (781 aa).

5-methyltetrahydropteroyltri-L-glutamate-binding positions include 20-23 and Lys131; that span reads RELK. L-homocysteine is bound by residues 453-455 and Glu506; that span reads IGS. L-methionine contacts are provided by residues 453 to 455 and Glu506; that span reads IGS. 5-methyltetrahydropteroyltri-L-glutamate-binding positions include 537 to 538 and Trp583; that span reads RC. Residue Asp621 participates in L-homocysteine binding. Asp621 provides a ligand contact to L-methionine. Glu627 contacts 5-methyltetrahydropteroyltri-L-glutamate. Zn(2+) contacts are provided by His663, Cys665, and Glu687. Catalysis depends on His716, which acts as the Proton donor. Cys748 lines the Zn(2+) pocket.

This sequence belongs to the vitamin-B12 independent methionine synthase family. It depends on Zn(2+) as a cofactor.

The enzyme catalyses 5-methyltetrahydropteroyltri-L-glutamate + L-homocysteine = tetrahydropteroyltri-L-glutamate + L-methionine. It functions in the pathway amino-acid biosynthesis; L-methionine biosynthesis via de novo pathway; L-methionine from L-homocysteine (MetE route): step 1/1. In terms of biological role, catalyzes the transfer of a methyl group from 5-methyltetrahydrofolate to homocysteine resulting in methionine formation. In Bradyrhizobium diazoefficiens (strain JCM 10833 / BCRC 13528 / IAM 13628 / NBRC 14792 / USDA 110), this protein is 5-methyltetrahydropteroyltriglutamate--homocysteine methyltransferase.